We begin with the raw amino-acid sequence, 266 residues long: Ribosomal RNA small subunit methyltransferase A (266 aa).

Asn12, Leu14, Gly39, Glu61, Asp87, and Asn107 together coordinate S-adenosyl-L-methionine.

Belongs to the class I-like SAM-binding methyltransferase superfamily. rRNA adenine N(6)-methyltransferase family. RsmA subfamily.

It localises to the cytoplasm. It carries out the reaction adenosine(1518)/adenosine(1519) in 16S rRNA + 4 S-adenosyl-L-methionine = N(6)-dimethyladenosine(1518)/N(6)-dimethyladenosine(1519) in 16S rRNA + 4 S-adenosyl-L-homocysteine + 4 H(+). Functionally, specifically dimethylates two adjacent adenosines (A1518 and A1519) in the loop of a conserved hairpin near the 3'-end of 16S rRNA in the 30S particle. May play a critical role in biogenesis of 30S subunits. In Nitratidesulfovibrio vulgaris (strain ATCC 29579 / DSM 644 / CCUG 34227 / NCIMB 8303 / VKM B-1760 / Hildenborough) (Desulfovibrio vulgaris), this protein is Ribosomal RNA small subunit methyltransferase A.